The sequence spans 912 residues: Probable dipeptidyl-aminopeptidase B (912 aa).

2 disordered regions span residues 1–30 and 48–68; these read MAAEKGGSSDEERKPLTRGSMEYRDSSNSL and NGSTHDTGPDEIGRGDRDYSD. Over 1–92 the chain is Cytoplasmic; it reads MAAEKGGSSD…GGKPVQKKVK (92 aa). Composition is skewed to basic and acidic residues over residues 7 to 25 and 54 to 67; these read GSSDEERKPLTRGSMEYRD and TGPDEIGRGDRDYS. Residues 93–113 traverse the membrane as a helical; Signal-anchor for type II membrane protein segment; that stretch reads IVLGFLLFLCLSGWSLAFVLF. Topologically, residues 114 to 912 are vacuolar; the sequence is LFGGHESSKT…RAATWVGMSI (799 aa). N-linked (GlcNAc...) asparagine glycosylation is found at N130, N210, N346, N569, and N656. S751 serves as the catalytic Charge relay system. The N-linked (GlcNAc...) asparagine glycan is linked to N810. Active-site charge relay system residues include D828 and H861. N-linked (GlcNAc...) asparagine glycosylation occurs at N897.

This sequence belongs to the peptidase S9B family.

Its subcellular location is the vacuole membrane. The enzyme catalyses Release of an N-terminal dipeptide, Xaa-Yaa-|-Zaa-, from a polypeptide, preferentially when Yaa is Pro, provided Zaa is neither Pro nor hydroxyproline.. Functionally, type IV dipeptidyl-peptidase which removes N-terminal dipeptides sequentially from polypeptides having unsubstituted N-termini provided that the penultimate residue is proline. This is Probable dipeptidyl-aminopeptidase B (DAPB) from Paracoccidioides brasiliensis (strain Pb18).